The primary structure comprises 258 residues: Indole-3-glycerol phosphate synthase (258 aa).

Belongs to the TrpC family.

It catalyses the reaction 1-(2-carboxyphenylamino)-1-deoxy-D-ribulose 5-phosphate + H(+) = (1S,2R)-1-C-(indol-3-yl)glycerol 3-phosphate + CO2 + H2O. It participates in amino-acid biosynthesis; L-tryptophan biosynthesis; L-tryptophan from chorismate: step 4/5. This chain is Indole-3-glycerol phosphate synthase, found in Legionella pneumophila (strain Paris).